We begin with the raw amino-acid sequence, 159 residues long: Ribosomal RNA large subunit methyltransferase H (159 aa).

S-adenosyl-L-methionine contacts are provided by residues Leu76, Gly108, and 127-132 (FSKMTF).

Belongs to the RNA methyltransferase RlmH family. In terms of assembly, homodimer.

It is found in the cytoplasm. The enzyme catalyses pseudouridine(1915) in 23S rRNA + S-adenosyl-L-methionine = N(3)-methylpseudouridine(1915) in 23S rRNA + S-adenosyl-L-homocysteine + H(+). Functionally, specifically methylates the pseudouridine at position 1915 (m3Psi1915) in 23S rRNA. This is Ribosomal RNA large subunit methyltransferase H from Clostridium botulinum (strain Langeland / NCTC 10281 / Type F).